The following is a 580-amino-acid chain: MDYPKMDYFLDVESAHRLLDVESAQRFFYSQGAQARRATLLLPPTLMAASSEDDIDRRPIRRVRSKSDTPYLAEARISFNLGAAEEVERLAAMRSDSLVPGTHTPPIRRRSKFANLGRIFKPWKWRKKKSEKFKHTSAALERKISMRQSREELIKRGVLKEIYDKDGELSISNEEDSLENGQSLSSSQLSLPALSEMEPVPMPRDPCSYEVLQPSDIMDGPDPGAPVKLPCLPVKLSPPLPPKKVMICMPVGGPDLSLVSYTAQKSGQQGVAQHHHTVLPSQIQHQLQYGSHGQHLPSTTGSLPMHPSGCRMIDELNKTLAMTMQRLESSEQRVPCSTSYHSSGLHSGDGVTKAGPMGLPEIRQVPTVVIECDDNKENVPHESDYEDSSCLYTREEEEEEEDEDDDSSLYTSSLAMKVCRKDSLAIKLSNRPSKRELEEKNILPRQTDEERLELRQQIGTKLTRRLSQRPTAEELEQRNILKPRNEQEEQEEKREIKRRLTRKLSQRPTVEELRERKILIRFSDYVEVADAQDYDRRADKPWTRLTAADKAAIRKELNEFKSTEMEVHELSRHLTRFHRP.

Phosphoserine occurs at positions 67 and 78. Thr104 carries the phosphothreonine modification. The Nuclear localization signal motif lies at Arg108–Lys129. The stretch at Ala138–Tyr163 is one RPEL 1 repeat. Disordered regions lie at residues Glu331–Gly355 and Lys376–Tyr410. Residues Pro335–Leu345 show a composition bias toward polar residues. Over residues Glu395–Ser407 the composition is skewed to acidic residues. 3 RPEL repeats span residues Asp422–Thr447, Thr460–Arg484, and Arg498–Ser523. A disordered region spans residues Leu462–Arg494. Ser467 is modified (phosphoserine). Over residues Thr471–Arg494 the composition is skewed to basic and acidic residues. Ser505 is subject to Phosphoserine.

This sequence belongs to the phosphatase and actin regulator family. As to quaternary structure, interacts (via RPEL repeats) with ACTA1 and PPP1CA; ACTA1 and PPP1CA compete for the same binding site. Detected in umbilical vein endothelial cells.

It localises to the cytoplasm. The protein resides in the synapse. Its subcellular location is the nucleus. Its function is as follows. Binds actin monomers (G actin) and plays a role in multiple processes including the regulation of actin cytoskeleton dynamics, actin stress fibers formation, cell motility and survival, formation of tubules by endothelial cells, and regulation of PPP1CA activity. Involved in the regulation of cortical neuron migration and dendrite arborization. This Homo sapiens (Human) protein is Phosphatase and actin regulator 1 (PHACTR1).